The primary structure comprises 503 residues: NAD(P)H-quinone oxidoreductase chain 4, chloroplastic (503 aa).

The next 14 membrane-spanning stretches (helical) occupy residues phenylalanine 3–phenylalanine 23, leucine 37–valine 57, glycine 84–alanine 104, leucine 113–alanine 130, leucine 134–methionine 154, phenylalanine 167–leucine 187, alanine 208–leucine 228, histidine 242–isoleucine 262, serine 274–threonine 294, isoleucine 305–aspartate 325, glycine 330–glycine 350, serine 385–isoleucine 405, isoleucine 416–methionine 436, and leucine 462–valine 482.

The protein belongs to the complex I subunit 4 family.

It is found in the plastid. The protein resides in the chloroplast thylakoid membrane. The catalysed reaction is a plastoquinone + NADH + (n+1) H(+)(in) = a plastoquinol + NAD(+) + n H(+)(out). The enzyme catalyses a plastoquinone + NADPH + (n+1) H(+)(in) = a plastoquinol + NADP(+) + n H(+)(out). This chain is NAD(P)H-quinone oxidoreductase chain 4, chloroplastic, found in Ipomoea purpurea (Common morning glory).